The primary structure comprises 85 residues: SKP1-like protein 6 (85 aa).

An interaction with the F-box domain of F-box proteins region spans residues 65–85 (MMAANYLNIQSLLDLTFSNCR).

It belongs to the SKP1 family. In terms of assembly, part of a SCF (SKP1-cullin-F-box) protein ligase complex.

It localises to the nucleus. It functions in the pathway protein modification; protein ubiquitination. In terms of biological role, involved in ubiquitination and subsequent proteasomal degradation of target proteins. Together with CUL1, RBX1 and a F-box protein, it forms a SCF E3 ubiquitin ligase complex. The functional specificity of this complex depends on the type of F-box protein. In the SCF complex, it serves as an adapter that links the F-box protein to CUL1. The chain is SKP1-like protein 6 (ASK6) from Arabidopsis thaliana (Mouse-ear cress).